The primary structure comprises 525 residues: Ankyrin repeat domain-containing protein SOWAHC (525 aa).

The interval 84 to 263 (CEGPSEPSGD…EESSGGGSVT (180 aa)) is disordered. A Phosphoserine modification is found at Ser-88. Positions 101–112 (AEPEAPDGPAGP) are enriched in low complexity. Ser-126, Ser-213, and Ser-226 each carry phosphoserine. Over residues 230–241 (SSGGGRGRGGGD) the composition is skewed to gly residues. A compositionally biased stretch (low complexity) spans 242–251 (SDSASVASSS). ANK repeat units lie at residues 301–330 (TGFT…KHQL) and 340–370 (GGYT…DVDI). The disordered stretch occupies residues 434 to 525 (DGGDHHHHHH…TLRPKSNVFG (92 aa)). A compositionally biased stretch (basic residues) spans 468-477 (IKPRLNKIRF). The segment covering 489 to 509 (RDPEQPLEGRGEEGVGEERPV) has biased composition (basic and acidic residues).

It belongs to the SOWAH family.

This is Ankyrin repeat domain-containing protein SOWAHC (SOWAHC) from Homo sapiens (Human).